The primary structure comprises 503 residues: 3-octaprenyl-4-hydroxybenzoate carboxy-lyase (503 aa).

Asn176 contributes to the Mn(2+) binding site. Residues 179 to 181 (IYR), 193 to 195 (RWL), and 198 to 199 (RG) contribute to the prenylated FMN site. Glu242 lines the Mn(2+) pocket. Asp303 functions as the Proton donor in the catalytic mechanism.

The protein belongs to the UbiD family. As to quaternary structure, homohexamer. The cofactor is prenylated FMN. It depends on Mn(2+) as a cofactor.

The protein resides in the cell membrane. The catalysed reaction is a 4-hydroxy-3-(all-trans-polyprenyl)benzoate + H(+) = a 2-(all-trans-polyprenyl)phenol + CO2. It participates in cofactor biosynthesis; ubiquinone biosynthesis. In terms of biological role, catalyzes the decarboxylation of 3-octaprenyl-4-hydroxy benzoate to 2-octaprenylphenol, an intermediate step in ubiquinone biosynthesis. In Ralstonia pickettii (strain 12J), this protein is 3-octaprenyl-4-hydroxybenzoate carboxy-lyase.